We begin with the raw amino-acid sequence, 520 residues long: O-methyltransferase cicE (520 aa).

Residues 300-301 (GG), Asp323, 355-356 (NF), and Arg371 contribute to the S-adenosyl-L-methionine site.

This sequence belongs to the class I-like SAM-binding methyltransferase superfamily. Cation-independent O-methyltransferase family.

The protein operates within phytotoxin biosynthesis. Functionally, O-methyltransferase; part of the gene cluster that mediates the biosynthesis of cichorine, a phytotoxin active against knapweed, corn, and soybeans. The first step in the pathway is performed by the non-reducing polyketide synthase pkbA that condenses one acetyl-CoA starter unit with 3 malonyl-CoA units. PkbA also catalyzes one methylation step to produce 3-methylorsellinate. The nonribosomal peptide synthase-like protein cicB, the cytochrome P450 monooxygenase cicH and the O-methyltransferase cicE are involved in the conversion of 3-methylorsellinate into nidulol. CicB converts 3-methylorsellinate to a yet unidentified intermediate, cicH may play a ring-closing role for cichorine and cicE is plausibly responsible for the methylation of one of the phenol groups. The oxidoreductase cicC acts downstream with still unidentified enzymes to further convert nidulol into cichorine. The chain is O-methyltransferase cicE from Emericella nidulans (strain FGSC A4 / ATCC 38163 / CBS 112.46 / NRRL 194 / M139) (Aspergillus nidulans).